The sequence spans 333 residues: MEVTNTSSIMWFFRDKGFDDPSIDKMLRKCKQLEKAQSDVASENWDYLSNIVGIQERKLPYIVSRCPKILTLRLDERLIPMVECLSSLGRNPREVASAITKFPPILSHSVEEKLCPLLAFFQALGVPETQLGKMILFNPRLISYSIDTKLTVIVSFLASLGLDQDGMIGKVLVKNPFLMGYSVDKRLRPTTEFLKSSVGLSEDGIKSVVMNFPQLLCRDVNKILKPNYDYLKECGFGDSQIATMVTGYPQILIKSVKNSLQPRIRFLVQVMGRGMDEVASYPEFFHHGLKKKVESRFKLVKKNNIDCSLREMLDCNTKKFHEKFGFSEVTASF.

The protein belongs to the mTERF family.

It localises to the plastid. Its subcellular location is the chloroplast. The protein resides in the mitochondrion. Transcription termination factor essential for chloroplast development. Required for maturation of 16S rRNA, 18S rRNA and 23S rRNA in the chloroplast. Binds to a specific region within the tRNA(Ile)(GAU) gene at a position adjacent to and downstream of the 16S rRNA gene. Required for the maturation of tRNA(Ile)(GAU). Binds to double-stranded DNA. The polypeptide is Transcription termination factor MTERF6, chloroplastic/mitochondrial (Arabidopsis thaliana (Mouse-ear cress)).